Reading from the N-terminus, the 359-residue chain is Protein mab-21-like 2-A (359 aa).

It belongs to the mab-21 family.

It localises to the nucleus. It is found in the cytoplasm. In terms of biological role, required for normal development of the eye. May promote dorsalization of the developing embryo by antagonizing the ventralizing factor bmp4. Functional antagonism of bmp4 may require interaction with smad1. Required for gastrulation and subsequent neural development. May function as a transcriptional repressor. This chain is Protein mab-21-like 2-A (mab21l2-a), found in Xenopus laevis (African clawed frog).